We begin with the raw amino-acid sequence, 875 residues long: Serine/threonine-protein kinase ATG1 (875 aa).

One can recognise a Protein kinase domain in the interval Tyr22–Ile318. Residues Ile28–Val36 and Lys51 each bind ATP. Asp168 (proton acceptor) is an active-site residue. The span at Glu367 to Ser379 shows a compositional bias: basic and acidic residues. 2 disordered regions span residues Glu367–Asn422 and Ile470–Ile515. The span at Thr380–Ala389 shows a compositional bias: polar residues. Positions Val390–Ile405 are enriched in basic and acidic residues. Polar residues-rich tracts occupy residues Asn406 to Pro420, Arg473 to Gln490, and Leu497 to Pro508.

It belongs to the protein kinase superfamily. Ser/Thr protein kinase family. APG1/unc-51/ULK1 subfamily. In terms of assembly, homodimer. Forms a ternary complex with ATG13 and ATG17.

The protein resides in the cytoplasm. It is found in the preautophagosomal structure membrane. It catalyses the reaction L-seryl-[protein] + ATP = O-phospho-L-seryl-[protein] + ADP + H(+). It carries out the reaction L-threonyl-[protein] + ATP = O-phospho-L-threonyl-[protein] + ADP + H(+). Its function is as follows. Serine/threonine protein kinase involved in the cytoplasm to vacuole transport (Cvt) and found to be essential in autophagy, where it is required for the formation of autophagosomes. Involved in the clearance of protein aggregates which cannot be efficiently cleared by the proteasome. Required for selective autophagic degradation of the nucleus (nucleophagy) as well as for mitophagy which contributes to regulate mitochondrial quantity and quality by eliminating the mitochondria to a basal level to fulfill cellular energy requirements and preventing excess ROS production. Also involved in endoplasmic reticulum-specific autophagic process, in selective removal of ER-associated degradation (ERAD) substrates. Plays a key role in ATG9 and ATG23 cycling through the pre-autophagosomal structure and is necessary to promote ATG18 binding to ATG9 through phosphorylation of ATG9. Catalyzes phosphorylation of ATG4, decreasing the interaction between ATG4 and ATG8 and impairing deconjugation of PE-conjugated forms of ATG8. This Debaryomyces hansenii (strain ATCC 36239 / CBS 767 / BCRC 21394 / JCM 1990 / NBRC 0083 / IGC 2968) (Yeast) protein is Serine/threonine-protein kinase ATG1.